A 217-amino-acid polypeptide reads, in one-letter code: Pyridoxine/pyridoxamine 5'-phosphate oxidase (217 aa).

Substrate contacts are provided by residues 14 to 17 (RKSY) and Lys-72. FMN is bound by residues 67–72 (RVVLIK), 82–83 (YT), Arg-88, and Lys-89. Positions 129, 133, and 137 each coordinate substrate. FMN is bound by residues 146-147 (QS) and Trp-190. Position 196–198 (196–198 (RLH)) interacts with substrate. Arg-200 lines the FMN pocket.

Belongs to the pyridoxamine 5'-phosphate oxidase family. In terms of assembly, homodimer. It depends on FMN as a cofactor.

The catalysed reaction is pyridoxamine 5'-phosphate + O2 + H2O = pyridoxal 5'-phosphate + H2O2 + NH4(+). The enzyme catalyses pyridoxine 5'-phosphate + O2 = pyridoxal 5'-phosphate + H2O2. Its pathway is cofactor metabolism; pyridoxal 5'-phosphate salvage; pyridoxal 5'-phosphate from pyridoxamine 5'-phosphate: step 1/1. It functions in the pathway cofactor metabolism; pyridoxal 5'-phosphate salvage; pyridoxal 5'-phosphate from pyridoxine 5'-phosphate: step 1/1. Functionally, catalyzes the oxidation of either pyridoxine 5'-phosphate (PNP) or pyridoxamine 5'-phosphate (PMP) into pyridoxal 5'-phosphate (PLP). This chain is Pyridoxine/pyridoxamine 5'-phosphate oxidase, found in Acidovorax sp. (strain JS42).